The sequence spans 408 residues: S-adenosylmethionine:tRNA ribosyltransferase-isomerase (408 aa).

The protein belongs to the QueA family. Monomer.

It localises to the cytoplasm. The catalysed reaction is 7-aminomethyl-7-carbaguanosine(34) in tRNA + S-adenosyl-L-methionine = epoxyqueuosine(34) in tRNA + adenine + L-methionine + 2 H(+). It participates in tRNA modification; tRNA-queuosine biosynthesis. Its function is as follows. Transfers and isomerizes the ribose moiety from AdoMet to the 7-aminomethyl group of 7-deazaguanine (preQ1-tRNA) to give epoxyqueuosine (oQ-tRNA). The protein is S-adenosylmethionine:tRNA ribosyltransferase-isomerase of Trichormus variabilis (strain ATCC 29413 / PCC 7937) (Anabaena variabilis).